The following is a 286-amino-acid chain: Shikimate dehydrogenase (NADP(+)) (286 aa).

Shikimate contacts are provided by residues 25–27 (SLS) and T72. K76 (proton acceptor) is an active-site residue. Residue E88 coordinates NADP(+). Shikimate contacts are provided by N97 and D113. NADP(+) contacts are provided by residues 138 to 142 (GSGGA), 162 to 167 (NRTIER), and I232. Residue Y234 participates in shikimate binding. G255 is a binding site for NADP(+).

This sequence belongs to the shikimate dehydrogenase family. Homodimer.

It carries out the reaction shikimate + NADP(+) = 3-dehydroshikimate + NADPH + H(+). It functions in the pathway metabolic intermediate biosynthesis; chorismate biosynthesis; chorismate from D-erythrose 4-phosphate and phosphoenolpyruvate: step 4/7. Its function is as follows. Involved in the biosynthesis of the chorismate, which leads to the biosynthesis of aromatic amino acids. Catalyzes the reversible NADPH linked reduction of 3-dehydroshikimate (DHSA) to yield shikimate (SA). The polypeptide is Shikimate dehydrogenase (NADP(+)) (Magnetococcus marinus (strain ATCC BAA-1437 / JCM 17883 / MC-1)).